Here is a 158-residue protein sequence, read N- to C-terminus: D-aminoacyl-tRNA deacylase (158 aa).

The short motif at 138-139 (GP) is the Gly-cisPro motif, important for rejection of L-amino acids element.

This sequence belongs to the DTD family. As to quaternary structure, homodimer.

It localises to the cytoplasm. The catalysed reaction is glycyl-tRNA(Ala) + H2O = tRNA(Ala) + glycine + H(+). It catalyses the reaction a D-aminoacyl-tRNA + H2O = a tRNA + a D-alpha-amino acid + H(+). An aminoacyl-tRNA editing enzyme that deacylates mischarged D-aminoacyl-tRNAs. Hydrolyzes correctly charged, achiral, glycyl-tRNA(Gly). Deacylates mischarged endogenous and E.coli glycyl-tRNA(Ala), protecting cells against glycine mischarging by AlaRS. Acts via tRNA-based rather than protein-based catalysis; rejects L-amino acids rather than detecting D-amino acids in the active site. By recycling D-aminoacyl-tRNA to D-amino acids and free tRNA molecules, this enzyme counteracts the toxicity associated with the formation of D-aminoacyl-tRNA entities in vivo and helps enforce protein L-homochirality. This is D-aminoacyl-tRNA deacylase from Drosophila melanogaster (Fruit fly).